The following is a 114-amino-acid chain: Large ribosomal subunit protein P2v (114 aa).

The interval 74-114 is disordered; it reads VASGGGGGAAPAAEPASVESKKKEEEKEESEDDGGMMSLFD. Phosphoserine is present on Ser-103.

This sequence belongs to the eukaryotic ribosomal protein P1/P2 family. In terms of assembly, P1 and P2 exist as dimers at the large ribosomal subunit. Phosphorylated.

Functionally, plays an important role in the elongation step of protein synthesis. This is Large ribosomal subunit protein P2v (RPP2E) from Arabidopsis thaliana (Mouse-ear cress).